The chain runs to 207 residues: MYVMKQNGWVELICGSMFSGKSEELIRRVRRATYAHINVRVYKPAIDDRYDDKAIVSHDGTSTMARPIHDAVEILEDVDNNVEIVGIDEVQFFDNNVVDVIEELADRGIRVIVAGLDLDFRGEPFEPVPKIMALAESVTKLNAICPICGSPASRTQRLIDGKPASYNDPIILVGASESYEPRCRHHHEVPFRPENNFATKSWDALKS.

ATP is bound by residues 15–22 (GSMFSGKS) and 88–91 (DEVQ). Glu89 serves as the catalytic Proton acceptor. Residues Cys145, Cys148, Cys183, and His186 each coordinate Zn(2+).

This sequence belongs to the thymidine kinase family. Homotetramer.

It localises to the cytoplasm. The catalysed reaction is thymidine + ATP = dTMP + ADP + H(+). The polypeptide is Thymidine kinase (Oceanobacillus iheyensis (strain DSM 14371 / CIP 107618 / JCM 11309 / KCTC 3954 / HTE831)).